Consider the following 869-residue polypeptide: Phenylalanine--tRNA ligase beta subunit (869 aa).

The tRNA-binding domain maps to 41 to 162 (SQVTGPIVVG…QYGFSEAEYE (122 aa)). The region spanning 443–519 (PRAKAIHFKA…RLVGYDQIPI (77 aa)) is the B5 domain. The Mg(2+) site is built by Asp497, Asp503, Glu506, and Glu507. An FDX-ACB domain is found at 776-868 (STFPPVKQDL…EAAEIGAQLR (93 aa)).

Belongs to the phenylalanyl-tRNA synthetase beta subunit family. Type 1 subfamily. Tetramer of two alpha and two beta subunits. Mg(2+) is required as a cofactor.

The protein resides in the cytoplasm. The enzyme catalyses tRNA(Phe) + L-phenylalanine + ATP = L-phenylalanyl-tRNA(Phe) + AMP + diphosphate + H(+). This is Phenylalanine--tRNA ligase beta subunit from Bifidobacterium longum (strain NCC 2705).